Reading from the N-terminus, the 351-residue chain is Dual-specificity RNA methyltransferase RlmN (351 aa).

Glu90 (proton acceptor) is an active-site residue. Positions 96–330 (EKDHYTACLS…ATLRKSKGSD (235 aa)) constitute a Radical SAM core domain. A disulfide bond links Cys103 and Cys335. Cys110, Cys114, and Cys117 together coordinate [4Fe-4S] cluster. S-adenosyl-L-methionine is bound by residues 162–163 (GE), Ser194, 216–218 (SLH), and Asn292. The active-site S-methylcysteine intermediate is Cys335.

It belongs to the radical SAM superfamily. RlmN family. It depends on [4Fe-4S] cluster as a cofactor.

The protein resides in the cytoplasm. The enzyme catalyses adenosine(2503) in 23S rRNA + 2 reduced [2Fe-2S]-[ferredoxin] + 2 S-adenosyl-L-methionine = 2-methyladenosine(2503) in 23S rRNA + 5'-deoxyadenosine + L-methionine + 2 oxidized [2Fe-2S]-[ferredoxin] + S-adenosyl-L-homocysteine. It catalyses the reaction adenosine(37) in tRNA + 2 reduced [2Fe-2S]-[ferredoxin] + 2 S-adenosyl-L-methionine = 2-methyladenosine(37) in tRNA + 5'-deoxyadenosine + L-methionine + 2 oxidized [2Fe-2S]-[ferredoxin] + S-adenosyl-L-homocysteine. Functionally, specifically methylates position 2 of adenine 2503 in 23S rRNA and position 2 of adenine 37 in tRNAs. m2A2503 modification seems to play a crucial role in the proofreading step occurring at the peptidyl transferase center and thus would serve to optimize ribosomal fidelity. The polypeptide is Dual-specificity RNA methyltransferase RlmN (Solidesulfovibrio magneticus (strain ATCC 700980 / DSM 13731 / RS-1) (Desulfovibrio magneticus)).